A 494-amino-acid polypeptide reads, in one-letter code: Putative transporter SVOPL (494 aa).

10 helical membrane passes run 48-68 (IALF…IMLI), 86-106 (VAFV…LFGL), 121-141 (FLWG…IWFV), 179-199 (VFWL…IPTI), 203-223 (WLIR…KFIP), 281-301 (TLQI…VILA), 350-370 (IIST…INFL), 385-405 (LFFL…FLFM), 431-451 (AIGM…APFI), and 460-480 (FLGA…SAFT).

The protein belongs to the major facilitator superfamily.

The protein localises to the membrane. The chain is Putative transporter SVOPL (Svopl) from Mus musculus (Mouse).